The chain runs to 218 residues: Transmembrane gamma-carboxyglutamic acid protein 1 (218 aa).

Residues 1–20 constitute a propeptide that is removed on maturation; that stretch reads MGRIFLTGEKANSVLKRYPR. The Gla domain occupies 20–66; that stretch reads RANGLFEEIRQGNIERECKEEVCTFEEAREAFENNEKTKEFWNTYTK. At 21 to 80 the chain is on the extracellular side; it reads ANGLFEEIRQGNIERECKEEVCTFEEAREAFENNEKTKEFWNTYTKAQQGESNRGSDWFQ. A disulfide bridge links Cys37 with Cys42. Residues 81 to 101 traverse the membrane as a helical segment; that stretch reads FYLTFPLIFGLFIILLVIFLI. Over 102–218 the chain is Cytoplasmic; sequence WRCFLRNKTR…AMVPVATTIK (117 aa). The disordered stretch occupies residues 160–192; sequence STRLSNCDPPPTYEEATGQMNLRRSETEPHLDP. Over residues 182-192 the composition is skewed to basic and acidic residues; that stretch reads RRSETEPHLDP.

In terms of processing, gla residues are produced after subsequent post-translational modifications of glutamate by a vitamin K-dependent gamma-carboxylase.

The protein resides in the membrane. This is Transmembrane gamma-carboxyglutamic acid protein 1 (PRRG1) from Bos taurus (Bovine).